Consider the following 149-residue polypeptide: Large ribosomal subunit protein uL13 (149 aa).

This sequence belongs to the universal ribosomal protein uL13 family. As to quaternary structure, part of the 50S ribosomal subunit.

Its function is as follows. This protein is one of the early assembly proteins of the 50S ribosomal subunit, although it is not seen to bind rRNA by itself. It is important during the early stages of 50S assembly. This chain is Large ribosomal subunit protein uL13, found in Chlorobium phaeobacteroides (strain DSM 266 / SMG 266 / 2430).